We begin with the raw amino-acid sequence, 242 residues long: Transcription factor bHLH100 (242 aa).

One can recognise a bHLH domain in the interval 61 to 113; the sequence is MKKLNHNASERERRKKINTMFSSLRSCLPPTNQTKKLSVSATVSQALKYIPEL.

As to quaternary structure, homodimer. As to expression, expressed constitutively in roots, leaves, and stems.

It is found in the nucleus. Plays a role in metal homeostasis. Confers tolerance to high zinc (Zn) and nickel (Ni). The polypeptide is Transcription factor bHLH100 (BHLH100) (Arabidopsis thaliana (Mouse-ear cress)).